Consider the following 614-residue polypeptide: Heat shock protein SSB1 (614 aa).

The segment at 1 to 392 is nucleotide binding domain (NBD); it reads MSTEVYDGAI…ILSGKATSAE (392 aa). Residues 16–18, Lys74, 206–208, 272–279, and Gly343 each bind ATP; these read TTY, GGT, and ERAKRTLS. The interval 393-403 is inter-domain linker; it reads TADLLLLDVVP. Positions 404–614 are substrate binding domain (SBD); that stretch reads LSLGVAMEGN…RAVTKAMSSR (211 aa). Residues 517 to 613 form a lid domain (SBDalpha) region; it reads TSEIENMISE…KRAVTKAMSS (97 aa). The Nuclear export signal signature appears at 575–583; the sequence is IENTMSEAM.

Belongs to the heat shock protein 70 family. In terms of assembly, interacts with HAT1 in starvation conditions.

The protein localises to the nucleus. It is found in the cytoplasm. It catalyses the reaction ATP + H2O = ADP + phosphate + H(+). In terms of biological role, chaperone that interacts with the histone acetyltransferase HAT1 and mediates its translocation from the nucleus to the cytoplasm during germination and starvation conditions. Within the cytoplasm, HAT1 regulates autophagy via acetylation of the autophagy-related proteins ATG3 and ATG9. In Pyricularia oryzae (strain 70-15 / ATCC MYA-4617 / FGSC 8958) (Rice blast fungus), this protein is Heat shock protein SSB1.